Consider the following 264-residue polypeptide: Thymidylate synthase (264 aa).

A dUMP-binding site is contributed by R21. H51 is a (6R)-5,10-methylene-5,6,7,8-tetrahydrofolate binding site. DUMP is bound at residue 126 to 127 (RR). C146 serves as the catalytic Nucleophile. DUMP is bound by residues 166–169 (RSAD), N177, and 207–209 (HLY). D169 provides a ligand contact to (6R)-5,10-methylene-5,6,7,8-tetrahydrofolate. Residue A263 participates in (6R)-5,10-methylene-5,6,7,8-tetrahydrofolate binding.

Belongs to the thymidylate synthase family. Bacterial-type ThyA subfamily. As to quaternary structure, homodimer.

Its subcellular location is the cytoplasm. The catalysed reaction is dUMP + (6R)-5,10-methylene-5,6,7,8-tetrahydrofolate = 7,8-dihydrofolate + dTMP. The protein operates within pyrimidine metabolism; dTTP biosynthesis. Functionally, catalyzes the reductive methylation of 2'-deoxyuridine-5'-monophosphate (dUMP) to 2'-deoxythymidine-5'-monophosphate (dTMP) while utilizing 5,10-methylenetetrahydrofolate (mTHF) as the methyl donor and reductant in the reaction, yielding dihydrofolate (DHF) as a by-product. This enzymatic reaction provides an intracellular de novo source of dTMP, an essential precursor for DNA biosynthesis. The polypeptide is Thymidylate synthase (Bartonella henselae (strain ATCC 49882 / DSM 28221 / CCUG 30454 / Houston 1) (Rochalimaea henselae)).